The primary structure comprises 394 residues: MTVKVLVVDDSSFFRRRVSEIINADPRLEVIGNAVNGKEAVELVKKLQPDVITMDIEMPVMDGITAVREIMKVLPTPILMFSSLTQEGAKATLDALDAGALDFLPKKFEDIARNRDEAISLLQKRVGELARKRMFMRRPLRTTPAVAPASRYSAPVNAALTREAALTTAARTTAARVTPTSTTRQTMHSAVAAKPMARFKASGKKYQLMAIGTSTGGPVALQKILTQLPANFPYPIVLVQHMPATFTAAFAARLNNLSKISVKEAEDGDTLRAGVAYLAPGGKQMMLEGRPGSARLRILDGGDRMNYKPCVDVTFGSAAKVYNDKVLSMILTGMGADGREGARMLKTHGSTVWAQDEESCVVYGMPQAVAKAGISTEDLPLERFAERILVEVGR.

One can recognise a Response regulatory domain in the interval K4–L121. D55 bears the 4-aspartylphosphate mark. A CheB-type methylesterase domain is found at S202–R394. Active-site residues include S214, H241, and D337.

Belongs to the CheB family. Phosphorylated by CheA. Phosphorylation of the N-terminal regulatory domain activates the methylesterase activity.

It localises to the cytoplasm. It carries out the reaction [protein]-L-glutamate 5-O-methyl ester + H2O = L-glutamyl-[protein] + methanol + H(+). The catalysed reaction is L-glutaminyl-[protein] + H2O = L-glutamyl-[protein] + NH4(+). Involved in chemotaxis. Part of a chemotaxis signal transduction system that modulates chemotaxis in response to various stimuli. Catalyzes the demethylation of specific methylglutamate residues introduced into the chemoreceptors (methyl-accepting chemotaxis proteins or MCP) by CheR. Also mediates the irreversible deamidation of specific glutamine residues to glutamic acid. In Photobacterium profundum (strain SS9), this protein is Protein-glutamate methylesterase/protein-glutamine glutaminase 2.